Reading from the N-terminus, the 544-residue chain is WD repeat-containing protein 25 (544 aa).

Disordered stretches follow at residues 17–74 and 183–208; these read DSDS…EDPG and QRQALSTETGKGKDVEPQGPPAGRAP. A compositionally biased stretch (polar residues) spans 30–39; it reads FNATGQQKDT. 7 WD repeats span residues 244-286, 290-329, 330-373, 375-420, 424-463, 469-510, and 513-544; these read GHRG…HCLQ, LHTEAVRAARWAPCGRRILSGGFDFALHLTDLETGTQLFS, GRSD…RSYK, TIQQ…KISN, HERFTCPSLALHPREPVFLAQTNGNYLALFSTVWPYRMSR, GHKV…RACT, and GHTQACVGTTYHPVLPSVLATCSWGGDMKIWH.

Expressed in heart, muscle, testis, ovary, uterus and prostate.

The sequence is that of WD repeat-containing protein 25 from Homo sapiens (Human).